The sequence spans 471 residues: UDP-N-acetylmuramate--L-alanine ligase (471 aa).

Position 114-120 (114-120 (GTHGKTT)) interacts with ATP.

This sequence belongs to the MurCDEF family.

Its subcellular location is the cytoplasm. The catalysed reaction is UDP-N-acetyl-alpha-D-muramate + L-alanine + ATP = UDP-N-acetyl-alpha-D-muramoyl-L-alanine + ADP + phosphate + H(+). It participates in cell wall biogenesis; peptidoglycan biosynthesis. Functionally, cell wall formation. In Agrobacterium fabrum (strain C58 / ATCC 33970) (Agrobacterium tumefaciens (strain C58)), this protein is UDP-N-acetylmuramate--L-alanine ligase.